Reading from the N-terminus, the 493-residue chain is Rop guanine nucleotide exchange factor 10 (493 aa).

Disordered stretches follow at residues 1-45 (MFDG…RSDM) and 400-423 (GEAETRSESEAESEYEETEKVVAA). Residues 17 to 27 (DGMHTPEHELA) are compositionally biased toward basic and acidic residues. One can recognise a PRONE domain in the interval 35 to 401 (RRGKQNRRSD…RLVQRQLMGE (367 aa)).

In terms of biological role, guanine-nucleotide exchange factor (GEF) that acts as an activator of Rop (Rho of plants) GTPases by promoting the exchange of GDP for GTP. The sequence is that of Rop guanine nucleotide exchange factor 10 (ROPGEF10) from Arabidopsis thaliana (Mouse-ear cress).